The sequence spans 421 residues: FBD-associated F-box protein At5g56370 (421 aa).

One can recognise an F-box domain in the interval Met1–Asn52. Positions His332–Pro382 constitute an FBD domain.

The protein is FBD-associated F-box protein At5g56370 of Arabidopsis thaliana (Mouse-ear cress).